The following is a 166-amino-acid chain: UPF0336 protein ML2425 (166 aa).

One can recognise a MaoC-like domain in the interval 10-131 (LIGKHYRQLD…VIAEVRSEVT (122 aa)).

Belongs to the UPF0336 family.

The protein is UPF0336 protein ML2425 of Mycobacterium leprae (strain TN).